The chain runs to 308 residues: Ornithine carbamoyltransferase (308 aa).

Residues R103 and 130 to 133 contribute to the carbamoyl phosphate site; that span reads HPAQ. Residues N162, D221, and 225 to 226 each bind L-ornithine; that span reads SM. Residues 261 to 262 and R289 each bind carbamoyl phosphate; that span reads CL.

This sequence belongs to the aspartate/ornithine carbamoyltransferase superfamily. OTCase family.

It localises to the cytoplasm. It carries out the reaction carbamoyl phosphate + L-ornithine = L-citrulline + phosphate + H(+). It functions in the pathway amino-acid biosynthesis; L-arginine biosynthesis; L-arginine from L-ornithine and carbamoyl phosphate: step 1/3. Reversibly catalyzes the transfer of the carbamoyl group from carbamoyl phosphate (CP) to the N(epsilon) atom of ornithine (ORN) to produce L-citrulline. This chain is Ornithine carbamoyltransferase, found in Deinococcus radiodurans (strain ATCC 13939 / DSM 20539 / JCM 16871 / CCUG 27074 / LMG 4051 / NBRC 15346 / NCIMB 9279 / VKM B-1422 / R1).